Consider the following 78-residue polypeptide: Small ribosomal subunit protein bS18B (78 aa).

Belongs to the bacterial ribosomal protein bS18 family. In terms of assembly, part of the 30S ribosomal subunit. Forms a tight heterodimer with protein bS6.

Functionally, binds as a heterodimer with protein bS6 to the central domain of the 16S rRNA, where it helps stabilize the platform of the 30S subunit. This Streptomyces griseus subsp. griseus (strain JCM 4626 / CBS 651.72 / NBRC 13350 / KCC S-0626 / ISP 5235) protein is Small ribosomal subunit protein bS18B.